The following is a 159-amino-acid chain: MAEQTEKAFLKQPKVFLSSKISGKGKRPGKGGNRFWKNIGLGFKTPREAIDGAYIDSKCPFTGTVSIRGRILAGTCHSAKMQRTIIVRRNYLHFVKKYQRYEKRHSNIPAHVSPCFRVKEGDHVIIGQCRPLSKTVRFNVLKVIPAGASAFGKKAFTGV.

This sequence belongs to the universal ribosomal protein uS17 family.

It is found in the cytoplasm. This chain is Small ribosomal subunit protein uS17x (RPS11C), found in Arabidopsis thaliana (Mouse-ear cress).